A 450-amino-acid polypeptide reads, in one-letter code: MLVLFETSGGFALFKVLDEGKLSNVEDLGTEFYSAESARRMGLHKFLKNNCDDGEILAVADPKLGDIITEKLDIECVHNDAVMELLRGVRSQLTELLSGLDDNDLAPVSLELSHILARYKLKITSDKVETMIILSISLLDDLDKELNTYTTSVCELYGLHFPELANIVQDNILYAKVVKLMGNRINAATLDFSEILADEVEAELKEASMVSTRTEVSDLDLMHIQELCDQVLSIAEDKTLLCDDLKNKMNKIAPNLTALVGELVGARLISHCGSLWNLSKLPWSTIQILGAEKTLYKALKTKQATPKYGLIYHAPLVRQAAPENKGKIARSLAAKSALAIRCDAFGNGQDNTMGVESRLKLEARLRNLEGGDLGACEEEEEVNDKDTKKEADDEEEPKTEECSKKRKKEAELETVEDPAKKSKQEGVTGLLLLMLLISLIYFFSVNQLLW.

In terms of domain architecture, Nop spans 252-370; it reads IAPNLTALVG…LEARLRNLEG (119 aa). The segment at 375–423 is disordered; the sequence is ACEEEEEVNDKDTKKEADDEEEPKTEECSKKRKKEAELETVEDPAKKSK. Positions 399 to 423 are enriched in basic and acidic residues; that stretch reads TEECSKKRKKEAELETVEDPAKKSK.

Belongs to the NOP5/NOP56 family.

It localises to the nucleus. The protein resides in the nucleolus. Its function is as follows. Required for 60S ribosomal subunit biogenesis. The protein is Putative nucleolar protein 5-3 (NOP5-3) of Arabidopsis thaliana (Mouse-ear cress).